A 364-amino-acid polypeptide reads, in one-letter code: GDP-perosamine synthase (364 aa).

The residue at position 183 (Lys-183) is an N6-(pyridoxal phosphate)lysine.

It belongs to the DegT/DnrJ/EryC1 family. Homodecamer. Requires pyridoxal 5'-phosphate as cofactor.

The enzyme catalyses GDP-alpha-D-perosamine + 2-oxoglutarate = GDP-4-dehydro-alpha-D-rhamnose + L-glutamate. The protein operates within bacterial outer membrane biogenesis; LPS O-antigen biosynthesis. Its activity is regulated as follows. Divalent ions have no significant effect on activity. Functionally, catalyzes the synthesis of GDP-perosamine from GDP-4-keto-6-deoxy-D-mannose and L-glutamate. Can use only L-glutamate as amino donor. The chain is GDP-perosamine synthase from Escherichia coli O157:H7.